A 476-amino-acid chain; its full sequence is Vitamin D-binding protein (476 aa).

A signal peptide spans 1–16; sequence MKRVLVLLLALAFGHA. 3 consecutive Albumin domains span residues 17–208, 209–394, and 395–476; these read LERG…QMKQ, LLLL…LMKR, and QLTS…ILQS. 14 cysteine pairs are disulfide-bonded: cysteine 29-cysteine 75, cysteine 74-cysteine 83, cysteine 96-cysteine 112, cysteine 111-cysteine 122, cysteine 145-cysteine 190, cysteine 189-cysteine 198, cysteine 220-cysteine 266, cysteine 265-cysteine 273, cysteine 286-cysteine 300, cysteine 299-cysteine 311, cysteine 335-cysteine 376, cysteine 375-cysteine 384, cysteine 407-cysteine 453, and cysteine 452-cysteine 462. N-linked (GlcNAc...) asparagine glycosylation is present at asparagine 288. A Phosphoserine modification is found at serine 434.

It belongs to the ALB/AFP/VDB family. As to quaternary structure, associates with membrane-bound immunoglobulin on the surface of B-lymphocytes and with IgG Fc receptor on the membranes of T-lymphocytes. Interacts with LRP2; the interaction is required for renal uptake of GC in complex with 25-hydroxyvitamin D3.

It is found in the secreted. Involved in vitamin D transport and storage, scavenging of extracellular G-actin, enhancement of the chemotactic activity of C5 alpha for neutrophils in inflammation and macrophage activation. This Rattus norvegicus (Rat) protein is Vitamin D-binding protein (Gc).